We begin with the raw amino-acid sequence, 474 residues long: Calcium/calmodulin-dependent protein kinase type IV (474 aa).

Phosphoserine; by autocatalysis occurs at positions 11 and 12. The Protein kinase domain maps to 42-296 (FEVESELGRG…TFQALQHPWV (255 aa)). ATP is bound by residues 48 to 56 (LGRGATSIV) and K71. An O-linked (GlcNAc) threonine glycan is attached at T53. O-linked (GlcNAc) serine glycosylation is present at S54. An O-linked (GlcNAc) serine glycan is attached at S133. The active-site Proton acceptor is D160. S185 carries O-linked (GlcNAc) serine glycosylation. At T196 the chain carries Phosphothreonine; by CaMKK1 and CaMKK2. The autoinhibitory domain stretch occupies residues 297 to 336 (TGKAANFVHMDTAQKKLQEFNARRKLKAAVKAVVASSRLG). The interval 302–319 (NFVHMDTAQKKLQEFNAR) is PP2A-binding. Residues 318–337 (ARRKLKAAVKAVVASSRLGS) are calmodulin-binding. S332 is modified (phosphoserine; by autocatalysis). The interval 336–474 (GSASSSHTNI…PQQDAILPEY (139 aa)) is disordered. A Phosphoserine modification is found at S337. O-linked (GlcNAc) serine glycosylation is found at S340, S341, and S352. Polar residues predominate over residues 342 to 356 (HTNIQESNKASSEAQ). Residues 360–392 (DGKDKTDPLENKMQAGDHEAAKAAADETMKLQS) show a composition bias toward basic and acidic residues. Acidic residues predominate over residues 393–413 (EEVEEEEGVKEEEEEEEEEEE). The segment covering 431 to 454 (QEMKRNSEETLKSVEEEMDPKAEE) has biased composition (basic and acidic residues). Residues S437 and S443 each carry the phosphoserine modification.

It belongs to the protein kinase superfamily. CAMK Ser/Thr protein kinase family. CaMK subfamily. Monomer. Interacts with protein phosphatase 2A (PPP2CA/PPP2CB); the interaction is mutually exclusive with binding to Ca(2+)/calmodulin. Phosphorylated by CaMKK1 and CaMKK2 on Thr-196. Dephosphorylated by protein phosphatase 2A. Autophosphorylated on Ser-11 and Ser-12. In terms of processing, glycosylation at Ser-185 modulates the phosphorylation of CaMK4 at Thr-196 and negatively regulates its activity toward CREB1 in basal conditions and during early inomycin stimulation. Post-translationally, the N-terminus of calspermin is blocked. Isoform 1 is expressed in brain and isoform 2 is testis specific.

The protein localises to the cytoplasm. The protein resides in the nucleus. The enzyme catalyses L-seryl-[protein] + ATP = O-phospho-L-seryl-[protein] + ADP + H(+). It catalyses the reaction L-threonyl-[protein] + ATP = O-phospho-L-threonyl-[protein] + ADP + H(+). Its activity is regulated as follows. Activated by Ca(2+)/calmodulin. Binding of calmodulin results in conformational change that relieves intrasteric autoinhibition and allows phosphorylation of Thr-196 within the activation loop by CaMKK1 or CaMKK2. Phosphorylation of Thr-196 results in a 10-20-fold increase in total activity to generate Ca(2+)/calmodulin-independent activity. Autophosphorylation of the N-terminus Ser-11 and Ser-12 is required for full activation. Inactivated by protein phosphatase 2A (PPP2CA/PPP2CB) which dephosphorylates Thr-196, thereby terminating autonomous activity and helping to maintain the enzyme in its autoinhibited state. Its function is as follows. Calcium/calmodulin-dependent protein kinase that operates in the calcium-triggered CaMKK-CaMK4 signaling cascade and regulates, mainly by phosphorylation, the activity of several transcription activators, such as CREB1, MEF2D, JUN and RORA, which play pivotal roles in immune response, inflammation, and memory consolidation. In the thymus, regulates the CD4(+)/CD8(+) double positive thymocytes selection threshold during T-cell ontogeny. In CD4 memory T-cells, is required to link T-cell antigen receptor (TCR) signaling to the production of IL2, IFNG and IL4 (through the regulation of CREB and MEF2). Regulates the differentiation and survival phases of osteoclasts and dendritic cells (DCs). Mediates DCs survival by linking TLR4 and the regulation of temporal expression of BCL2. Phosphorylates the transcription activator CREB1 on 'Ser-133' in hippocampal neuron nuclei and contribute to memory consolidation and long term potentiation (LTP) in the hippocampus. Can activate the MAP kinases MAPK1/ERK2, MAPK8/JNK1 and MAPK14/p38 and stimulate transcription through the phosphorylation of ELK1 and ATF2. Can also phosphorylate in vitro CREBBP, PRM2, MEF2A and STMN1/OP18. Heat-stable, acidic, calmodulin-binding protein. This Rattus norvegicus (Rat) protein is Calcium/calmodulin-dependent protein kinase type IV (Camk4).